The primary structure comprises 473 residues: Aspartyl/glutamyl-tRNA(Asn/Gln) amidotransferase subunit B (473 aa).

Belongs to the GatB/GatE family. GatB subfamily. Heterotrimer of A, B and C subunits.

The enzyme catalyses L-glutamyl-tRNA(Gln) + L-glutamine + ATP + H2O = L-glutaminyl-tRNA(Gln) + L-glutamate + ADP + phosphate + H(+). It carries out the reaction L-aspartyl-tRNA(Asn) + L-glutamine + ATP + H2O = L-asparaginyl-tRNA(Asn) + L-glutamate + ADP + phosphate + 2 H(+). In terms of biological role, allows the formation of correctly charged Asn-tRNA(Asn) or Gln-tRNA(Gln) through the transamidation of misacylated Asp-tRNA(Asn) or Glu-tRNA(Gln) in organisms which lack either or both of asparaginyl-tRNA or glutaminyl-tRNA synthetases. The reaction takes place in the presence of glutamine and ATP through an activated phospho-Asp-tRNA(Asn) or phospho-Glu-tRNA(Gln). The protein is Aspartyl/glutamyl-tRNA(Asn/Gln) amidotransferase subunit B of Francisella tularensis subsp. tularensis (strain FSC 198).